The sequence spans 218 residues: Ribose-5-phosphate isomerase A (218 aa).

Residues 28–31 (TGST), 81–84 (DGAD), and 94–97 (KGGG) each bind substrate. The active-site Proton acceptor is the Glu103. Residue Lys121 coordinates substrate.

The protein belongs to the ribose 5-phosphate isomerase family. Homodimer.

The enzyme catalyses aldehydo-D-ribose 5-phosphate = D-ribulose 5-phosphate. It participates in carbohydrate degradation; pentose phosphate pathway; D-ribose 5-phosphate from D-ribulose 5-phosphate (non-oxidative stage): step 1/1. Functionally, catalyzes the reversible conversion of ribose-5-phosphate to ribulose 5-phosphate. The chain is Ribose-5-phosphate isomerase A from Vibrio vulnificus (strain CMCP6).